The chain runs to 397 residues: Acetate kinase (397 aa).

Asparagine 7 provides a ligand contact to Mg(2+). Residue lysine 14 coordinates ATP. Arginine 91 serves as a coordination point for substrate. Aspartate 148 acts as the Proton donor/acceptor in catalysis. Residues 208-212 (HLGNG), 283-285 (DLR), and 331-335 (GVGEN) contribute to the ATP site. Residue glutamate 384 coordinates Mg(2+).

Belongs to the acetokinase family. As to quaternary structure, homodimer. Mg(2+) is required as a cofactor. Mn(2+) serves as cofactor.

Its subcellular location is the cytoplasm. The catalysed reaction is acetate + ATP = acetyl phosphate + ADP. It functions in the pathway metabolic intermediate biosynthesis; acetyl-CoA biosynthesis; acetyl-CoA from acetate: step 1/2. Catalyzes the formation of acetyl phosphate from acetate and ATP. Can also catalyze the reverse reaction. The chain is Acetate kinase from Syntrophomonas wolfei subsp. wolfei (strain DSM 2245B / Goettingen).